The chain runs to 827 residues: SID1 transmembrane family member 1 (827 aa).

Residues 1–19 (MRGCLRLALLCALPWLLLA) form the signal peptide. At 20–309 (ASPGHPAKSP…SIKESVYVKS (290 aa)) the chain is on the extracellular side. 5 N-linked (GlcNAc...) asparagine glycosylation sites follow: Asn-57, Asn-67, Asn-83, Asn-136, and Asn-282. Residues 310–330 (SLFSVFIFLSFYLGCLLVGFV) traverse the membrane as a helical segment. Residues 331 to 442 (HYLRFQRKSI…DRRIVSKKYK (112 aa)) are Cytoplasmic-facing. Positions 355 to 408 (ASHPIAASTPEGSNYGTIDESSSSPGRQMSSSDGGPPGQSDTDSSVEESDFDTM) are disordered. Residues 364–374 (PEGSNYGTIDE) show a composition bias toward polar residues. Low complexity predominate over residues 375 to 397 (SSSSPGRQMSSSDGGPPGQSDTD). The span at 398-408 (SSVEESDFDTM) shows a compositional bias: acidic residues. The helical transmembrane segment at 443 to 463 (IYFWNIITIAVFYALPVIQLV) threads the bilayer. Residues 464–494 (ITYQTVVNVTGNQDICYYNFLCAHPLGVLSA) lie on the Extracellular side of the membrane. N-linked (GlcNAc...) asparagine glycosylation is present at Asn-471. Residues 495 to 515 (FNNILSNLGHVLLGFLFLLIV) traverse the membrane as a helical segment. Residues 516–541 (LRRDILHRRALEAKDIFAVEYGIPKH) are Cytoplasmic-facing. A helical transmembrane segment spans residues 542 to 562 (FGLFYAMGIALMMEGVLSACY). The Extracellular segment spans residues 563–572 (HVCPNYSNFQ). Residue Asn-567 is glycosylated (N-linked (GlcNAc...) asparagine). The helical transmembrane segment at 573-590 (FDTSFMYMIAGLCMLKLY) threads the bilayer. Residues 591–600 (QTRHPDINAS) lie on the Cytoplasmic side of the membrane. The chain crosses the membrane as a helical span at residues 601–621 (AYSAYASFAVVIMVTVLGVVF). Residues 622–626 (GKNDV) lie on the Extracellular side of the membrane. The helical transmembrane segment at 627 to 647 (WFWVIFSAIHVLASLALSTQI) threads the bilayer. Over 648 to 683 (YYMGRFKIDLGIFRRAAMVFYTDCIQQCSRPLYMDR) the chain is Cytoplasmic. Residues 684–704 (MVLLVVGNLVNWSFALFGLIY) form a helical membrane-spanning segment. The Extracellular portion of the chain corresponds to 705–710 (RPRDFA). The chain crosses the membrane as a helical span at residues 711 to 731 (SYMLGIFICNLLLYLAFYIIM). Residues 732–741 (KLRSSEKVLP) are Cytoplasmic-facing. The chain crosses the membrane as a helical span at residues 742–762 (VPLFCIVATAVMWAAALYFFF). Over 763–791 (QNLSSWEGTPAESREKNRECILLDFFDDH) the chain is Extracellular. Asn-764 carries an N-linked (GlcNAc...) asparagine glycan. The helical transmembrane segment at 792–812 (DIWHFLSATALFFSFLVLLTL) threads the bilayer. At 813–827 (DDDLDVVRRDQIPVF) the chain is on the cytoplasmic side.

Belongs to the SID1 family.

It is found in the membrane. In terms of biological role, in vitro binds long double-stranded RNA (dsRNA) (500 and 700 base pairs), but not dsRNA shorter than 300 bp. Not involved in RNA autophagy, a process in which RNA is directly imported into lysosomes in an ATP-dependent manner, and degraded. The polypeptide is SID1 transmembrane family member 1 (SIDT1) (Homo sapiens (Human)).